A 677-amino-acid chain; its full sequence is DNA ligase (677 aa).

Residues 38–42 (DSVYD), 87–88 (SL), and glutamate 119 contribute to the NAD(+) site. Lysine 121 acts as the N6-AMP-lysine intermediate in catalysis. The NAD(+) site is built by arginine 142, glutamate 179, lysine 296, and lysine 320. Zn(2+)-binding residues include cysteine 414, cysteine 417, cysteine 432, and cysteine 438. Residues 595–677 (VVKSEIAGKT…LKLLKSKGVF (83 aa)) form the BRCT domain.

The protein belongs to the NAD-dependent DNA ligase family. LigA subfamily. The cofactor is Mg(2+). Mn(2+) is required as a cofactor.

It catalyses the reaction NAD(+) + (deoxyribonucleotide)n-3'-hydroxyl + 5'-phospho-(deoxyribonucleotide)m = (deoxyribonucleotide)n+m + AMP + beta-nicotinamide D-nucleotide.. Its function is as follows. DNA ligase that catalyzes the formation of phosphodiester linkages between 5'-phosphoryl and 3'-hydroxyl groups in double-stranded DNA using NAD as a coenzyme and as the energy source for the reaction. It is essential for DNA replication and repair of damaged DNA. This chain is DNA ligase, found in Coxiella burnetii (strain CbuG_Q212) (Coxiella burnetii (strain Q212)).